An 86-amino-acid chain; its full sequence is Large ribosomal subunit protein bL31 (86 aa).

The disordered stretch occupies residues 65–86 (YRMASSDSSEQKDKSSEEKKES). Residues 73–86 (SEQKDKSSEEKKES) show a composition bias toward basic and acidic residues.

This sequence belongs to the bacterial ribosomal protein bL31 family. Type A subfamily. As to quaternary structure, part of the 50S ribosomal subunit.

Functionally, binds the 23S rRNA. This chain is Large ribosomal subunit protein bL31, found in Prochlorococcus marinus (strain NATL1A).